The chain runs to 469 residues: Citrate synthase, mitochondrial (469 aa).

The transit peptide at 1 to 33 directs the protein to the mitochondrion; the sequence is MAPVMRLGSAALRSSIHLTSRQTAFTAARCYSS. H352 is an active-site residue.

The protein belongs to the citrate synthase family.

Its subcellular location is the mitochondrion matrix. It catalyses the reaction oxaloacetate + acetyl-CoA + H2O = citrate + CoA + H(+). It functions in the pathway carbohydrate metabolism; tricarboxylic acid cycle; isocitrate from oxaloacetate: step 1/2. The protein is Citrate synthase, mitochondrial (cit-1) of Neurospora crassa (strain ATCC 24698 / 74-OR23-1A / CBS 708.71 / DSM 1257 / FGSC 987).